The chain runs to 232 residues: Ubiquinone biosynthesis O-methyltransferase (232 aa).

Residues Arg36, Gly55, Asp76, and Leu120 each coordinate S-adenosyl-L-methionine.

This sequence belongs to the methyltransferase superfamily. UbiG/COQ3 family.

The catalysed reaction is a 3-demethylubiquinol + S-adenosyl-L-methionine = a ubiquinol + S-adenosyl-L-homocysteine + H(+). It catalyses the reaction a 3-(all-trans-polyprenyl)benzene-1,2-diol + S-adenosyl-L-methionine = a 2-methoxy-6-(all-trans-polyprenyl)phenol + S-adenosyl-L-homocysteine + H(+). It functions in the pathway cofactor biosynthesis; ubiquinone biosynthesis. Functionally, O-methyltransferase that catalyzes the 2 O-methylation steps in the ubiquinone biosynthetic pathway. This Pseudomonas savastanoi pv. phaseolicola (strain 1448A / Race 6) (Pseudomonas syringae pv. phaseolicola (strain 1448A / Race 6)) protein is Ubiquinone biosynthesis O-methyltransferase.